The following is a 212-amino-acid chain: Imidazole glycerol phosphate synthase subunit HisH (212 aa).

Residues 1 to 212 form the Glutamine amidotransferase type-1 domain; sequence MLAILDYKAG…YEYCKEVSDA (212 aa). Cysteine 79 functions as the Nucleophile in the catalytic mechanism. Active-site residues include histidine 187 and glutamate 189.

Heterodimer of HisH and HisF.

The protein resides in the cytoplasm. It catalyses the reaction 5-[(5-phospho-1-deoxy-D-ribulos-1-ylimino)methylamino]-1-(5-phospho-beta-D-ribosyl)imidazole-4-carboxamide + L-glutamine = D-erythro-1-(imidazol-4-yl)glycerol 3-phosphate + 5-amino-1-(5-phospho-beta-D-ribosyl)imidazole-4-carboxamide + L-glutamate + H(+). The catalysed reaction is L-glutamine + H2O = L-glutamate + NH4(+). It functions in the pathway amino-acid biosynthesis; L-histidine biosynthesis; L-histidine from 5-phospho-alpha-D-ribose 1-diphosphate: step 5/9. IGPS catalyzes the conversion of PRFAR and glutamine to IGP, AICAR and glutamate. The HisH subunit catalyzes the hydrolysis of glutamine to glutamate and ammonia as part of the synthesis of IGP and AICAR. The resulting ammonia molecule is channeled to the active site of HisF. In Maridesulfovibrio salexigens (strain ATCC 14822 / DSM 2638 / NCIMB 8403 / VKM B-1763) (Desulfovibrio salexigens), this protein is Imidazole glycerol phosphate synthase subunit HisH.